A 112-amino-acid chain; its full sequence is MVATKKTKKSTDNINNKLQLVMKSGKYTLGYKTVLRTLRNSKSKLVIIANNCPPLRKSEIEYYAMLAKVTVHHFHGNNVDLGTACGKYFRVCCLSIIDPGDSDIIKTTPGEQ.

It belongs to the eukaryotic ribosomal protein eL30 family.

In Zea mays (Maize), this protein is Large ribosomal subunit protein eL30 (RPL30).